We begin with the raw amino-acid sequence, 128 residues long: MGLMWGLFSVIIASAAQLSLGFAASHLPPMTHLWDFIAALLAFGLDARILLLGLQGYLLSVFCWYKTLHKLALSKAYALLSMSYVLVWIASMVLPGWEGTFSLKALLGVACIMSGLMLIFLPTTKQRY.

Over 1–2 the chain is Cytoplasmic; sequence MG. Residues 3–23 form a helical membrane-spanning segment; the sequence is LMWGLFSVIIASAAQLSLGFA. Topologically, residues 24 to 32 are periplasmic; it reads ASHLPPMTH. A helical transmembrane segment spans residues 33-53; that stretch reads LWDFIAALLAFGLDARILLLG. Over 54 to 76 the chain is Cytoplasmic; the sequence is LQGYLLSVFCWYKTLHKLALSKA. The chain crosses the membrane as a helical span at residues 77–97; it reads YALLSMSYVLVWIASMVLPGW. Residues 98–100 lie on the Periplasmic side of the membrane; that stretch reads EGT. The chain crosses the membrane as a helical span at residues 101 to 121; the sequence is FSLKALLGVACIMSGLMLIFL. Over 122 to 128 the chain is Cytoplasmic; the sequence is PTTKQRY.

Belongs to the ArnF family. Heterodimer of ArnE and ArnF.

It localises to the cell inner membrane. It functions in the pathway bacterial outer membrane biogenesis; lipopolysaccharide biosynthesis. Its function is as follows. Translocates 4-amino-4-deoxy-L-arabinose-phosphoundecaprenol (alpha-L-Ara4N-phosphoundecaprenol) from the cytoplasmic to the periplasmic side of the inner membrane. The sequence is that of Probable 4-amino-4-deoxy-L-arabinose-phosphoundecaprenol flippase subunit ArnF from Escherichia coli O7:K1 (strain IAI39 / ExPEC).